The following is a 443-amino-acid chain: Thymidine phosphorylase (443 aa).

The protein belongs to the thymidine/pyrimidine-nucleoside phosphorylase family. As to quaternary structure, homodimer.

The catalysed reaction is thymidine + phosphate = 2-deoxy-alpha-D-ribose 1-phosphate + thymine. Its pathway is pyrimidine metabolism; dTMP biosynthesis via salvage pathway; dTMP from thymine: step 1/2. In terms of biological role, the enzymes which catalyze the reversible phosphorolysis of pyrimidine nucleosides are involved in the degradation of these compounds and in their utilization as carbon and energy sources, or in the rescue of pyrimidine bases for nucleotide synthesis. In Shewanella baltica (strain OS155 / ATCC BAA-1091), this protein is Thymidine phosphorylase.